A 1458-amino-acid polypeptide reads, in one-letter code: ATPase family AAA domain-containing protein 2B (1458 aa).

The interval 1 to 155 (MVNTRKSSLR…LRGEKKGDGD (155 aa)) is disordered. Ser-16 carries the phosphoserine modification. Residues 23 to 33 (PGAGAEPGATG) are compositionally biased toward gly residues. A compositionally biased stretch (low complexity) spans 34 to 58 (GSSHFISSRTRSSKTRAASCPAAKA). Ser-79, Ser-81, and Ser-86 each carry phosphoserine. Positions 99–115 (VCKDKSKSRSTGQREEW) are enriched in basic and acidic residues. A compositionally biased stretch (polar residues) spans 116-129 (NLSTGQARLTSQPG). At Ser-140 the chain carries Phosphoserine. Phosphothreonine is present on Thr-221. Positions 244-286 (NSYGIQNHHEVSTEGEEEESQEEDGDIEVEEAEGEENDRPYNL) are disordered. The segment covering 256 to 279 (TEGEEEESQEEDGDIEVEEAEGEE) has biased composition (acidic residues). A Phosphoserine modification is found at Ser-318. Residues 321 to 332 (RRSHIRRKKHAI) are compositionally biased toward basic residues. The segment at 321–353 (RRSHIRRKKHAIHSSDTTSSDEERFERRKSKSM) is disordered. 441 to 448 (GPPGTGKT) provides a ligand contact to ATP. A Phosphoserine modification is found at Ser-939. Positions 943 to 974 (QLSESEKSRMEDQEENTLRELRLFLRDVTKRL) form a coiled coil. In terms of domain architecture, Bromo spans 951-1066 (RMEDQEENTL…DTAHAIIAAE (116 aa)). Disordered stretches follow at residues 1189 to 1208 (DCHE…NDES), 1217 to 1257 (QGQR…EQTS), and 1309 to 1330 (LLED…DDLE). The span at 1240 to 1252 (NESLLVNSSSSLN) shows a compositional bias: low complexity. 2 positions are modified to phosphoserine: Ser-1338 and Ser-1347.

Belongs to the AAA ATPase family. Binds acetylated lysine residues in histone H1.4, H2A, H2B, H3 and H4 (in vitro).

It localises to the nucleus. This chain is ATPase family AAA domain-containing protein 2B (ATAD2B), found in Homo sapiens (Human).